Here is a 149-residue protein sequence, read N- to C-terminus: Transcriptional repressor NrdR (149 aa).

A zinc finger spans residues 3–34 (CPFCTAEETKVIDSRLAADGYQIRRRRECIGC). Positions 49 to 139 (PYIIKNNGNR…VYLSFDDIEE (91 aa)) constitute an ATP-cone domain.

The protein belongs to the NrdR family. It depends on Zn(2+) as a cofactor.

In terms of biological role, negatively regulates transcription of bacterial ribonucleotide reductase nrd genes and operons by binding to NrdR-boxes. The protein is Transcriptional repressor NrdR of Haemophilus ducreyi (strain 35000HP / ATCC 700724).